The following is a 3456-amino-acid chain: Genome polyprotein (3456 aa).

Residues 600–743 form the Peptidase S30 domain; that stretch reads NVANIPLDDF…ATRLKQIQFY (144 aa). Catalysis depends on for P1 proteinase activity residues His640, Asp652, and Ser689. The Peptidase C6 domain occupies 1075 to 1196; it reads VWEFNEGYCY…EGEMLTYKVG (122 aa). The active-site For helper component proteinase activity is Cys1083. The HAT 1 repeat unit spans residues 1094–1126; the sequence is FINEDEMEFYKNQMNQIVLNLGAWPTFEQYLVE. The For helper component proteinase activity role is filled by His1155. Residues 1617–1768 form the Helicase ATP-binding domain; it reads NIRTSGETDV…TRHKIKVETL (152 aa). 1630–1637 provides a ligand contact to ATP; the sequence is SGVGGGKS. One can recognise a Helicase C-terminal domain in the interval 1787 to 1947; sequence DATSVGDVIL…GIKPVCDRVD (161 aa). Position 2304 is an O-(5'-phospho-RNA)-tyrosine (Tyr2304). The Peptidase C4 domain maps to 2412–2636; sequence AVDSHVGTPT…VEWSRLLPTT (225 aa). Active-site for nuclear inclusion protein A activity residues include His2457, Asp2494, and Cys2566. Residues 2597–2629 form an HAT 2 repeat; sequence HIFEPVNETFIEMLAKMEYAKGFWKFNPELVEW. One can recognise a RdRp catalytic domain in the interval 2891–3011; that stretch reads WVFIDCDGSR…NCPRSTANAI (121 aa). An HAT 3 repeat occupies 3082–3115; that stretch reads LNAAYIESFGYEDLMTEIEKFAHFWAKKHGLNDV.

In terms of processing, VPg is uridylylated by the polymerase and is covalently attached to the 5'-end of the genomic RNA. This uridylylated form acts as a nucleotide-peptide primer for the polymerase. Genome polyprotein of potyviruses undergoes post-translational proteolytic processing by the main proteinase NIa-pro resulting in the production of at least ten individual proteins. The P1 proteinase and the HC-pro cleave only their respective C-termini autocatalytically. 6K1 is essential for proper proteolytic separation of P3 from CI.

Its subcellular location is the host cytoplasmic vesicle. The protein localises to the virion. The catalysed reaction is RNA(n) + a ribonucleoside 5'-triphosphate = RNA(n+1) + diphosphate. It carries out the reaction Hydrolyzes glutaminyl bonds, and activity is further restricted by preferences for the amino acids in P6 - P1' that vary with the species of potyvirus, e.g. Glu-Xaa-Xaa-Tyr-Xaa-Gln-|-(Ser or Gly) for the enzyme from tobacco etch virus. The natural substrate is the viral polyprotein, but other proteins and oligopeptides containing the appropriate consensus sequence are also cleaved.. The enzyme catalyses Hydrolyzes a Gly-|-Gly bond at its own C-terminus, commonly in the sequence -Tyr-Xaa-Val-Gly-|-Gly, in the processing of the potyviral polyprotein.. Functionally, required for aphid transmission and also has proteolytic activity. Only cleaves a Gly-Gly dipeptide at its own C-terminus. Interacts with virions and aphid stylets. Acts as a suppressor of RNA-mediated gene silencing, also known as post-transcriptional gene silencing (PTGS), a mechanism of plant viral defense that limits the accumulation of viral RNAs. May have RNA-binding activity. Has helicase activity. It may be involved in replication. In terms of biological role, indispensable for virus replication. Its function is as follows. Mediates the cap-independent, EIF4E-dependent translation of viral genomic RNAs. Binds to the cap-binding site of host EIF4E and thus interferes with the host EIF4E-dependent mRNA export and translation. VPg-RNA directly binds EIF4E and is a template for transcription. Also forms trimeric complexes with EIF4E-EIF4G, which are templates for translation. Functionally, has RNA-binding and proteolytic activities. An RNA-dependent RNA polymerase that plays an essential role in the virus replication. In terms of biological role, involved in aphid transmission, cell-to-cell and systemis movement, encapsidation of the viral RNA and in the regulation of viral RNA amplification. This chain is Genome polyprotein, found in Sweet potato mild mottle virus (isolate Salazar) (SPMMV).